A 349-amino-acid chain; its full sequence is tRNA pseudouridine synthase D (349 aa).

Phe27 contributes to the substrate binding site. The active-site Nucleophile is the Asp80. A substrate-binding site is contributed by Asn129. A TRUD domain is found at 155–303 (GVPNYFGAQR…VEAARRAMLL (149 aa)). Phe329 contacts substrate.

This sequence belongs to the pseudouridine synthase TruD family.

The enzyme catalyses uridine(13) in tRNA = pseudouridine(13) in tRNA. Functionally, responsible for synthesis of pseudouridine from uracil-13 in transfer RNAs. The chain is tRNA pseudouridine synthase D from Shigella sonnei (strain Ss046).